The primary structure comprises 275 residues: ORF2/4 protein (275 aa).

Disordered regions lie at residues 44–103 (LGRP…DGEL) and 116–207 (ADPQ…PPPT). Over residues 79 to 98 (GTGGDAAGGEAGGSRGAGDG) the composition is skewed to gly residues. Residues 129-139 (GQRKNARKRLR) are compositionally biased toward basic residues. The span at 170–188 (TRTTSPAAPAAATPQSPAR) shows a compositional bias: low complexity.

This Torque teno virus (isolate Human/Finland/Hel32/2002) (TTV) protein is ORF2/4 protein.